We begin with the raw amino-acid sequence, 31 residues long: Cyclotide vibi-F (31 aa).

A cross-link (cyclopeptide (Gly-Asn)) is located at residues 1 to 31 (GTIPCGESCVFIPCLTSALGCSCKSKVCYKN). 3 cysteine pairs are disulfide-bonded: C5–C21, C9–C23, and C14–C28.

Post-translationally, this is a cyclic peptide.

Functionally, probably participates in a plant defense mechanism. The polypeptide is Cyclotide vibi-F (Viola biflora (Yellow wood violet)).